The sequence spans 863 residues: Axin-1 (863 aa).

A disordered region spans residues 1–81; that stretch reads MNVQEQGFPL…PEGSASPTPP (81 aa). Residues 20 to 29 carry the Tankyrase-binding motif motif; sequence APRPPVPGEE. Positions 34-61 are enriched in polar residues; the sequence is STDSRPVNHSFCSGKGTSIKSETSTATP. S75 is modified (phosphoserine). S77 bears the Phosphoserine; by CK1 mark. One can recognise an RGS domain in the interval 88 to 211; it reads SLHSLLDDQD…LKSDIYLEYT (124 aa). The interval 209-338 is interaction with TP53; the sequence is EYTRTGSESP…DADTLSLTDS (130 aa). 3 disordered regions span residues 215-240, 249-268, and 315-344; these read SESP…YLPT, CDQD…SRLT, and ATSA…DGIP. S217 is modified (phosphoserine). Acidic residues predominate over residues 249-258; that stretch reads CDQDADEDDG. Positions 325-339 are enriched in low complexity; that stretch reads SLSSDADTLSLTDSS. Positions 348-432 are interaction with GSK3B; the sequence is IRKQHRREMQ…EDGEMPSGPM (85 aa). An interaction with SIAH1 region spans residues 353-411; sequence RREMQESIQVNGRVPLPHIPRTYRMPKEIRVEPQKFAEELIHRLEAVQRTREAEEKLEE. The interaction with beta-catenin stretch occupies residues 433–501; the sequence is ASHKLPSVPA…SPDSGHVAKT (69 aa). S468 carries the post-translational modification Phosphoserine; by CK1. T480 is subject to Phosphothreonine; by GSK3-beta. Position 485 is a phosphoserine; by GSK3-beta (S485). Phosphoserine is present on residues S492 and S509. The interaction with RNF111 stretch occupies residues 505-758; it reads GGTASGHGKH…PVLSVVPAVS (254 aa). A compositionally biased stretch (basic residues) spans 529 to 542; it reads HHRHVHHHVHHNSA. Disordered regions lie at residues 529-624 and 642-664; these read HHRH…DAEK and HRKA…SRPL. The span at 543–554 shows a compositional bias: basic and acidic residues; that stretch reads RPKEQMEAEVAR. Residues 572-790 are interaction with PPP2CA; it reads PRSYSENAGT…CDSIVVAYYF (219 aa). The span at 575–584 shows a compositional bias: polar residues; it reads YSENAGTTLS. Residues 678–753 are interaction with HIPK2; sequence AQLRNSVQPS…RPACAPVLSV (76 aa). One can recognise a DIX domain in the interval 781-863; sequence CDSIVVAYYF…KIIGKVEKVD (83 aa). Residues K858 and K861 each participate in a glycyl lysine isopeptide (Lys-Gly) (interchain with G-Cter in SUMO) cross-link.

As to quaternary structure, homodimer. Component of the beta-catenin destruction complex, containing at least CTNNB1, an axin and GSK3B, that regulates CTNNB1 protein levels through phosphorylation and ubiquitination. Interacts with GSK3B; the interaction hyperphosphorylates CTNNB1 leading to its ubiquitination and destruction. Interacts with DAXX; the interaction stimulates the interaction of DAXX with TP53, stimulates 'Ser-46' phosphorylation of TP53 and induces cell death on UV irradiation. Also interacts with APC, RNF111, SMAD6 and SMAD7. Interacts (via the C-terminal) with PPP1CA; the interaction dephosphorylates AXIN1 and regulates interaction with GSK3B. Interacts with PPP2CA; the interaction dephosphorylates AXIN1. Interacts with MDFI; the interaction decreases AXIN1-mediated JUN N-terminal kinase (JNK) activation. Interacts with MDFIC; the interaction inhibits beta-cateninin-mediated signaling and AXIN1-mediated JUN N-terminal kinase (JNK) activation. Binds ANKRD6, PIAS1, PIAS2, PIAS4, SUMO1, MAP3K1 and MAP3K4. Component of the AXIN1-HIPK2-TP53 complex. Interacts directly in the complex with TP53 and HIPK2. Interacts with DIXDC1; the interaction prevents interaction with MAP3K1. Interacts with AIDA; the interaction blocks the AXIN1-mediated JNK activation through disrupting AXIN1 homodimerization and Wnt signaling. Interacts with LRP5 (via its phosphorylated PPPSP motifs); the interaction is stimulated by WNT1 and GSK3B and activates beta-catenin signaling. Interacts with CTNNB1 (via the armadillo repeats 2-7). Interacts with MACF1. Found in a complex composed of MACF1, APC, AXIN1, CTNNB1 and GSK3B. Interacts with TNKS. Interacts with DAB2; the interaction is mutually exclusive with the AXIN1:PPP1CA interaction. Interacts with ZBED3 (via PPPSP motif); the interaction is direct, enhanced by protein kinase GSK3B and casein kinase CSNK1E activities and decreases GSK3B-induced beta-catenin serine and threonine phosphorylations. Interacts with WDR26. Interacts with GID8. Interacts with SIAH1 and SIAH2; both probably catalyze AXIN1 ubiquitination and subsequent proteasome-mediated ubiquitin-dependent degradation. Interaction with GSK3B and AXIN1 is competitive. Phosphorylation and dephosphorylation of AXIN1 regulates assembly and function of the beta-catenin complex. Phosphorylated by CK1 and GSK3B. Dephosphorylated by PPP1CA and PPP2CA. Phosphorylation by CK1 enhances binding of GSK3B to AXIN1. Also phosphorylated by CDK2 which regulates interaction with CTNBB1. Post-translationally, ADP-ribosylated by tankyrase TNKS and TNKS2. Poly-ADP-ribosylated protein is recognized by RNF146, followed by ubiquitination and subsequent activation of the Wnt signaling pathway. In terms of processing, ubiquitinated by RNF146 when poly-ADP-ribosylated, leading to its degradation and subsequent activation of the Wnt signaling pathway. Deubiquitinated by USP34, deubiquitinated downstream of beta-catenin stabilization step: deubiquitination is important for nuclear accumulation during Wnt signaling to positively regulate beta-catenin (CTNBB1)-mediated transcription. Sumoylation at Lys-858 and Lys-861 prevents ubiquitination and degradation. Sumoylation is required for AXIN1-mediated JNK activation. Ubiquitination by SIAH1 and SIAH2 induces its proteasomal degradation as part of the activation of the Wnt signaling pathway. In terms of tissue distribution, expressed in embryonic stem cells.

It localises to the cytoplasm. The protein resides in the nucleus. It is found in the cell membrane. Its subcellular location is the membrane. Its function is as follows. Component of the beta-catenin destruction complex required for regulating CTNNB1 levels through phosphorylation and ubiquitination, and modulating Wnt-signaling. Controls dorsoventral patterning via two opposing effects; down-regulates CTNNB1 to inhibit the Wnt signaling pathway and ventralize embryos, but also dorsalizes embryos by activating a Wnt-independent JNK signaling pathway. In Wnt signaling, probably facilitates the phosphorylation of CTNNB1 and APC by GSK3B. Likely to function as a tumor suppressor. Facilitates the phosphorylation of TP53 by HIPK2 upon ultraviolet irradiation. Enhances TGF-beta signaling by recruiting the RNF111 E3 ubiquitin ligase and promoting the degradation of inhibitory SMAD7. Also a component of the AXIN1-HIPK2-TP53 complex which controls cell growth, apoptosis and development. This Mus musculus (Mouse) protein is Axin-1 (Axin1).